We begin with the raw amino-acid sequence, 174 residues long: Repair DNA polymerase X (174 aa).

The involved in ssDNA binding stretch occupies residues 42–51 (REEKMLNDVD). The Mg(2+) site is built by D49 and D51. A disulfide bridge links C81 with C86. Residue D100 coordinates Mg(2+).

It belongs to the DNA polymerase type-X family. Mg(2+) serves as cofactor.

It localises to the virion. It carries out the reaction DNA(n) + a 2'-deoxyribonucleoside 5'-triphosphate = DNA(n+1) + diphosphate. Error-prone polymerase lacking a proofreading 3'-5' exonuclease which catalyzes the gap-filling reaction during the DNA repair process. Specifically binds intermediates in the single-nucleotide base-excision repair process. Also catalyzes DNA polymerization with low nucleotide-insertion fidelity. Probably acts as a strategic DNA mutase, which gives rise to a rapid emergence of variants. Generates mismatched G-G pairs, in that case, the polymerase first binds the deoxynucleotide followed by mismatch formation. Together with the viral DNA ligase, fills the single nucleotide gaps generated by the AP endonuclease. Binds DNA with high affinity via the helix alphaE. This Ornithodoros (relapsing fever ticks) protein is Repair DNA polymerase X.